A 165-amino-acid polypeptide reads, in one-letter code: Chorismate pyruvate-lyase (165 aa).

M35, R77, L115, and E156 together coordinate substrate.

This sequence belongs to the UbiC family. As to quaternary structure, monomer.

It is found in the cytoplasm. The catalysed reaction is chorismate = 4-hydroxybenzoate + pyruvate. Its pathway is cofactor biosynthesis; ubiquinone biosynthesis. Functionally, removes the pyruvyl group from chorismate, with concomitant aromatization of the ring, to provide 4-hydroxybenzoate (4HB) for the ubiquinone pathway. The sequence is that of Chorismate pyruvate-lyase from Salmonella enteritidis PT4 (strain P125109).